The sequence spans 374 residues: Queuine tRNA-ribosyltransferase (374 aa).

Asp-89 (proton acceptor) is an active-site residue. Substrate-binding positions include Asp-89 to Phe-93, Asp-143, Gln-187, and Gly-214. The RNA binding stretch occupies residues Gly-245–Asp-251. The active-site Nucleophile is the Asp-264. An RNA binding; important for wobble base 34 recognition region spans residues Thr-269–Arg-273. Zn(2+) is bound by residues Cys-302, Cys-304, Cys-307, and His-333.

This sequence belongs to the queuine tRNA-ribosyltransferase family. Homodimer. Within each dimer, one monomer is responsible for RNA recognition and catalysis, while the other monomer binds to the replacement base PreQ1. Requires Zn(2+) as cofactor.

The catalysed reaction is 7-aminomethyl-7-carbaguanine + guanosine(34) in tRNA = 7-aminomethyl-7-carbaguanosine(34) in tRNA + guanine. Its pathway is tRNA modification; tRNA-queuosine biosynthesis. Functionally, catalyzes the base-exchange of a guanine (G) residue with the queuine precursor 7-aminomethyl-7-deazaguanine (PreQ1) at position 34 (anticodon wobble position) in tRNAs with GU(N) anticodons (tRNA-Asp, -Asn, -His and -Tyr). Catalysis occurs through a double-displacement mechanism. The nucleophile active site attacks the C1' of nucleotide 34 to detach the guanine base from the RNA, forming a covalent enzyme-RNA intermediate. The proton acceptor active site deprotonates the incoming PreQ1, allowing a nucleophilic attack on the C1' of the ribose to form the product. After dissociation, two additional enzymatic reactions on the tRNA convert PreQ1 to queuine (Q), resulting in the hypermodified nucleoside queuosine (7-(((4,5-cis-dihydroxy-2-cyclopenten-1-yl)amino)methyl)-7-deazaguanosine). This is Queuine tRNA-ribosyltransferase from Yersinia pseudotuberculosis serotype O:1b (strain IP 31758).